A 295-amino-acid chain; its full sequence is ER-localized J domain-containing protein 5 (295 aa).

The first 20 residues, 1–20, serve as a signal peptide directing secretion; it reads MNGYWKPALVVLGLVSLSYA. The Lumenal segment spans residues 21–130; the sequence is FTTIETEIFQ…GFYFSRMKPK (110 aa). The J domain maps to 42–110; that stretch reads DMNFYKFLKL…RKIYDYYLQN (69 aa). A helical transmembrane segment spans residues 131 to 151; the sequence is TWFLLAFIWIVVNIGQYIISI. The Cytoplasmic segment spans residues 152-295; the sequence is IQYRSQRSRI…PNGKVIYSRK (144 aa). The interval 259–287 is disordered; the sequence is KYDGNQTKKGNKVKKGSAKKGQKKMELPN. Positions 267-280 are enriched in basic residues; that stretch reads KGNKVKKGSAKKGQ.

The protein belongs to the DnaJ family.

The protein localises to the endoplasmic reticulum membrane. Functionally, dnaJ-like chaperone required for the folding capacity of the endoplasmic reticulum. The polypeptide is ER-localized J domain-containing protein 5 (ERJ5) (Saccharomyces cerevisiae (strain ATCC 204508 / S288c) (Baker's yeast)).